The sequence spans 386 residues: F420 non-reducing hydrogenase I small subunit (386 aa).

A signal peptide (tat-type signal) is located at residues 1-51; the sequence is MVEMSTGTTNLVRTLDSMDFLKMDRRTFMKAVSALGATAFLGTYQTEIVNA. Residues Cys67, Cys70, Cys178, Cys227, His273, Cys276, Cys296, and Cys302 each contribute to the [4Fe-4S] cluster site. [3Fe-4S] cluster contacts are provided by Cys311, Cys330, and Cys333.

The protein belongs to the [NiFe]/[NiFeSe] hydrogenase small subunit family. In terms of assembly, composed of a large subunit (VhoA), a small subunit (VhoG) and a cytochrome subunit (VhoC). It depends on [4Fe-4S] cluster as a cofactor. Requires [3Fe-4S] cluster as cofactor. In terms of processing, predicted to be exported by the Tat system. The position of the signal peptide cleavage has not been experimentally proven.

It localises to the cell membrane. It catalyses the reaction methanophenazine + H2 = dihydromethanophenazine. Its function is as follows. Part of the F420 non-reducing hydrogenase I complex that catalyzes the reduction of methanophenazine to dihydromethanophenazine. The polypeptide is F420 non-reducing hydrogenase I small subunit (Methanosarcina mazei (strain ATCC BAA-159 / DSM 3647 / Goe1 / Go1 / JCM 11833 / OCM 88) (Methanosarcina frisia)).